We begin with the raw amino-acid sequence, 194 residues long: Cation channel sperm-associated auxiliary subunit zeta (194 aa).

As to quaternary structure, component of the CatSper complex or CatSpermasome composed of the core pore-forming members CATSPER1, CATSPER2, CATSPER3 and CATSPER4 as well as auxiliary members CATSPERB, CATSPERG2, CATSPERD, CATSPERE, CATSPERZ, C2CD6/CATSPERT, SLCO6C1, TMEM249, TMEM262 and EFCAB9. HSPA1 may be an additional auxiliary complex member. The core complex members CATSPER1, CATSPER2, CATSPER3 and CATSPER4 form a heterotetrameric channel. The auxiliary CATSPERB, CATSPERG2, CATSPERD and CATSPERE subunits form a pavilion-like structure over the pore which stabilizes the complex through interactions with CATSPER4, CATSPER3, CATSPER1 and CATSPER2 respectively. SLCO6C1 interacts with CATSPERE and TMEM262/CATSPERH interacts with CATSPERB, further stabilizing the complex. C2CD6/CATSPERT interacts at least with CATSPERD and is required for targeting the CatSper complex in the flagellar membrane. Interacts with EFCAB9; the interaction is direct, Ca(2+)-dependent and connects EFCAB9 with the CatSper complex. Dissociates from EFCAB9 at elevated pH. Testis-specific. Expressed in adult but not in fetal testis. Not expressed in ovary. Within testis, expression is restricted to spermatids.

The protein resides in the cell projection. It localises to the cilium. It is found in the flagellum membrane. Functionally, auxiliary component of the CatSper complex, a complex involved in sperm cell hyperactivation. Sperm cell hyperactivation is needed for sperm motility which is essential late in the preparation of sperm for fertilization. Required for a distribution of the CatSper complex in linear quadrilateral nanodomains along the flagellum, maximizing fertilization inside the mammalian female reproductive tract. Together with EFCAB9, associates with the CatSper channel pore and is required for the two-row structure of each single CatSper channel. This Mus musculus (Mouse) protein is Cation channel sperm-associated auxiliary subunit zeta.